Reading from the N-terminus, the 1242-residue chain is ATP-dependent RNA helicase DHX8 (1242 aa).

Disordered regions lie at residues 75-283 and 354-449; these read RPSR…DDPE and SMKE…GLLP. Basic and acidic residues-rich tracts occupy residues 87–97, 113–141, and 180–196; these read TVGDKKEDKKS, YSKK…KTDM, and RDRD…DRHS. Basic residues-rich tracts occupy residues 197–222 and 232–252; these read DRRR…RRSR and DRRH…RSRS. Residues 253–269 are compositionally biased toward basic and acidic residues; the sequence is RSTERRDRRDRSRDCSE. Positions 285 to 356 constitute an S1 motif domain; the sequence is GKIYSGKIAN…TGQKVSLSMK (72 aa). Polar residues predominate over residues 388–399; sequence FSSSTSMLNLQG. Over residues 439-449 the composition is skewed to acidic residues; sequence PDFDEETGLLP. Positions 596 to 759 constitute a Helicase ATP-binding domain; that stretch reads IKAVTDNQIL…FFKAPIFTIP (164 aa). 609–616 is a binding site for ATP; that stretch reads GETGSGKT. The short motif at 706 to 709 is the DEAH box element; sequence DEAH. A Helicase C-terminal domain is found at 777-957; the sequence is YLDASLITVM…TTVLQLKTMG (181 aa).

It belongs to the DEAD box helicase family. DEAH subfamily. DDX8/PRP22 sub-subfamily. Identified in the spliceosome C complex.

It localises to the nucleus. It carries out the reaction ATP + H2O = ADP + phosphate + H(+). Functionally, involved in pre-mRNA splicing as component of the spliceosome. Facilitates nuclear export of spliced mRNA by releasing the RNA from the spliceosome. Before and after egg-chamber formation, required for nurse-cell chromatin dispersal (NCCD) probably by playing a role in spliceosome localization to chromatin/interchromatin spaces. In Drosophila melanogaster (Fruit fly), this protein is ATP-dependent RNA helicase DHX8.